We begin with the raw amino-acid sequence, 63 residues long: Large ribosomal subunit protein bL35 (63 aa).

Belongs to the bacterial ribosomal protein bL35 family.

This is Large ribosomal subunit protein bL35 from Thermobifida fusca (strain YX).